A 257-amino-acid chain; its full sequence is UPF0246 protein CLL_A2361 (257 aa).

The protein belongs to the UPF0246 family.

This Clostridium botulinum (strain Eklund 17B / Type B) protein is UPF0246 protein CLL_A2361.